A 150-amino-acid chain; its full sequence is D-aminoacyl-tRNA deacylase (150 aa).

The Gly-cisPro motif, important for rejection of L-amino acids motif lies at 138 to 139 (GP).

The protein belongs to the DTD family. As to quaternary structure, homodimer.

It is found in the cytoplasm. It catalyses the reaction glycyl-tRNA(Ala) + H2O = tRNA(Ala) + glycine + H(+). The catalysed reaction is a D-aminoacyl-tRNA + H2O = a tRNA + a D-alpha-amino acid + H(+). In terms of biological role, an aminoacyl-tRNA editing enzyme that deacylates mischarged D-aminoacyl-tRNAs. Also deacylates mischarged glycyl-tRNA(Ala), protecting cells against glycine mischarging by AlaRS. Acts via tRNA-based rather than protein-based catalysis; rejects L-amino acids rather than detecting D-amino acids in the active site. By recycling D-aminoacyl-tRNA to D-amino acids and free tRNA molecules, this enzyme counteracts the toxicity associated with the formation of D-aminoacyl-tRNA entities in vivo and helps enforce protein L-homochirality. The sequence is that of D-aminoacyl-tRNA deacylase from Opitutus terrae (strain DSM 11246 / JCM 15787 / PB90-1).